We begin with the raw amino-acid sequence, 133 residues long: Small ribosomal subunit protein uS8c (133 aa).

It belongs to the universal ribosomal protein uS8 family. Part of the 30S ribosomal subunit.

The protein localises to the plastid. The protein resides in the chloroplast. Its function is as follows. One of the primary rRNA binding proteins, it binds directly to 16S rRNA central domain where it helps coordinate assembly of the platform of the 30S subunit. This Cyanidium caldarium (Red alga) protein is Small ribosomal subunit protein uS8c (rps8).